We begin with the raw amino-acid sequence, 84 residues long: MQKQRLLNVGFGNFVVAERVVSIVNPASAPMRRLREEARDQGRLVDATQGRKTRSIIVTDSNHVILSAIQAETIGQRFIQEENS.

This sequence belongs to the RemA family.

In Oleidesulfovibrio alaskensis (strain ATCC BAA-1058 / DSM 17464 / G20) (Desulfovibrio alaskensis), this protein is Putative regulatory protein Dde_2720.